The sequence spans 560 residues: Dihydroxy-acid dehydratase (560 aa).

D78 is a Mg(2+) binding site. Residue C119 participates in [2Fe-2S] cluster binding. 2 residues coordinate Mg(2+): D120 and K121. The residue at position 121 (K121) is an N6-carboxylysine. C192 contributes to the [2Fe-2S] cluster binding site. Residue E446 participates in Mg(2+) binding. Residue S472 is the Proton acceptor of the active site.

Belongs to the IlvD/Edd family. Homodimer. [2Fe-2S] cluster serves as cofactor. The cofactor is Mg(2+).

It catalyses the reaction (2R)-2,3-dihydroxy-3-methylbutanoate = 3-methyl-2-oxobutanoate + H2O. The catalysed reaction is (2R,3R)-2,3-dihydroxy-3-methylpentanoate = (S)-3-methyl-2-oxopentanoate + H2O. Its pathway is amino-acid biosynthesis; L-isoleucine biosynthesis; L-isoleucine from 2-oxobutanoate: step 3/4. It functions in the pathway amino-acid biosynthesis; L-valine biosynthesis; L-valine from pyruvate: step 3/4. Its function is as follows. Functions in the biosynthesis of branched-chain amino acids. Catalyzes the dehydration of (2R,3R)-2,3-dihydroxy-3-methylpentanoate (2,3-dihydroxy-3-methylvalerate) into 2-oxo-3-methylpentanoate (2-oxo-3-methylvalerate) and of (2R)-2,3-dihydroxy-3-methylbutanoate (2,3-dihydroxyisovalerate) into 2-oxo-3-methylbutanoate (2-oxoisovalerate), the penultimate precursor to L-isoleucine and L-valine, respectively. This chain is Dihydroxy-acid dehydratase, found in Anaeromyxobacter dehalogenans (strain 2CP-1 / ATCC BAA-258).